Consider the following 28-residue polypeptide: Cruzioseptin-10 (28 aa).

As to expression, expressed by the skin glands.

It is found in the secreted. In terms of biological role, has antimicrobial activity. This chain is Cruzioseptin-10, found in Cruziohyla calcarifer (Splendid leaf frog).